Reading from the N-terminus, the 411-residue chain is Argininosuccinate synthase (411 aa).

Residues 15 to 23 (AYSGGLDTS) and Ala42 contribute to the ATP site. Residues Tyr93 and Ser98 each coordinate L-citrulline. Gly123 is a binding site for ATP. Residues Thr125, Asn129, and Asp130 each coordinate L-aspartate. Asn129 is an L-citrulline binding site. L-citrulline is bound by residues Arg133, Ser185, Ser194, Glu270, and Tyr282.

Belongs to the argininosuccinate synthase family. Type 1 subfamily. Homotetramer.

It localises to the cytoplasm. It carries out the reaction L-citrulline + L-aspartate + ATP = 2-(N(omega)-L-arginino)succinate + AMP + diphosphate + H(+). It functions in the pathway amino-acid biosynthesis; L-arginine biosynthesis; L-arginine from L-ornithine and carbamoyl phosphate: step 2/3. The sequence is that of Argininosuccinate synthase from Psychrobacter sp. (strain PRwf-1).